A 193-amino-acid chain; its full sequence is MEIVFVSENENKITEAREILLPLGFQPIFCGVTCRETGLTFTENAVLKAQAAVGSVKDVPIMADDSGICVDALNGMPGVLSSRWSQDGRNIDLLLWQMRDVPDVHRTAHFVCSIACVMPNTEVRTVSSVWHGRILHVPDGTGGFGYDPVFLPDGYSVSAAGLGSDLKNRISHRYKALRLMSSLLKRTYSSCHA.

7–12 provides a ligand contact to substrate; that stretch reads SENENK. Residue aspartate 65 is the Proton acceptor of the active site. Aspartate 65 contributes to the Mg(2+) binding site. Substrate is bound by residues serine 66, 144 to 147, lysine 167, and 172 to 173; these read FGYD and HR.

It belongs to the HAM1 NTPase family. Homodimer. Mg(2+) serves as cofactor.

The catalysed reaction is XTP + H2O = XMP + diphosphate + H(+). It carries out the reaction dITP + H2O = dIMP + diphosphate + H(+). It catalyses the reaction ITP + H2O = IMP + diphosphate + H(+). In terms of biological role, pyrophosphatase that catalyzes the hydrolysis of nucleoside triphosphates to their monophosphate derivatives, with a high preference for the non-canonical purine nucleotides XTP (xanthosine triphosphate), dITP (deoxyinosine triphosphate) and ITP. Seems to function as a house-cleaning enzyme that removes non-canonical purine nucleotides from the nucleotide pool, thus preventing their incorporation into DNA/RNA and avoiding chromosomal lesions. The polypeptide is dITP/XTP pyrophosphatase (Tropheryma whipplei (strain TW08/27) (Whipple's bacillus)).